Reading from the N-terminus, the 617-residue chain is Proline--tRNA ligase (617 aa).

Belongs to the class-II aminoacyl-tRNA synthetase family. ProS type 1 subfamily. Homodimer.

It localises to the cytoplasm. The enzyme catalyses tRNA(Pro) + L-proline + ATP = L-prolyl-tRNA(Pro) + AMP + diphosphate. Catalyzes the attachment of proline to tRNA(Pro) in a two-step reaction: proline is first activated by ATP to form Pro-AMP and then transferred to the acceptor end of tRNA(Pro). As ProRS can inadvertently accommodate and process non-cognate amino acids such as alanine and cysteine, to avoid such errors it has two additional distinct editing activities against alanine. One activity is designated as 'pretransfer' editing and involves the tRNA(Pro)-independent hydrolysis of activated Ala-AMP. The other activity is designated 'posttransfer' editing and involves deacylation of mischarged Ala-tRNA(Pro). The misacylated Cys-tRNA(Pro) is not edited by ProRS. This Streptococcus pneumoniae (strain Hungary19A-6) protein is Proline--tRNA ligase.